The sequence spans 241 residues: Class B acid phosphatase (241 aa).

The first 27 residues, 1-27 (MFITTKKSLIALVLATAGLISSPVSFA), serve as a signal peptide directing secretion. Catalysis depends on Asp-72, which acts as the Nucleophile. Mg(2+) contacts are provided by Asp-72 and Asp-74. Asp-74 functions as the Proton donor in the catalytic mechanism. Residues 141–142 (TG) and Lys-181 each bind substrate. Asp-196 contributes to the Mg(2+) binding site.

It belongs to the class B bacterial acid phosphatase family. Homotetramer. Requires Mg(2+) as cofactor.

The protein resides in the periplasm. It carries out the reaction a phosphate monoester + H2O = an alcohol + phosphate. Functionally, dephosphorylates several organic phosphate monoesters. Also has a phosphotransferase activity catalyzing the transfer of low-energy phosphate groups from organic phosphate monoesters to free hydroxyl groups of various organic compounds. In Edwardsiella ictaluri (strain 93-146), this protein is Class B acid phosphatase.